The chain runs to 529 residues: MMKKVQRFGGAMMAPVLLFAFTGIVVGLSSVFTNTEVMGKIAEEGTVWYNFWYVISEGGWTVFRQMPILFAIGLPISLATKTNARACMETFALYTTFNYFVAAILKVFYGIDAAKQVADKVTGYSAIGGVPTLDTNLFGGILIAALVVYLHNKYFDKKLPDFLGVFQGSVFVYIVGFVVMIPCAFLTVLIWPKFQMGISALQGFMKASGIFGVWIYTFLERILIPTGLHHFVYTPFVFGPAAVPDGIQVYWVQHIKEFAQSTQSLKSLFPQGGFALHGNSKIFGAPGIALAMYATAKSDKKKAVAALLIPIIFTAVISGITEPLEFTFLFIAPVLFAVHACLAATMAATMYAFGVVGNMGGGLLDFFFLNWIPMFKNHSGTVIAQIVIGLIFTAIYFVVFRFLILKMDLKTPGREDEDEEMKLYSKADYRAKHGEGDAKGGVSSAEDEYAQKGAIILEALGGKENIEELNNCATRLRVSVKDASKLLPDAAFKAAGAHGVVRKGTAIQVIIGLSVPQVRERIEEMMKKG.

The region spanning 1 to 416 (MMKKVQRFGG…MDLKTPGRED (416 aa)) is the PTS EIIC type-1 domain. The next 12 membrane-spanning stretches (helical) occupy residues 8-28 (FGGA…VVGL), 59-79 (GWTV…ISLA), 91-111 (FALY…FYGI), 130-150 (VPTL…VVYL), 170-190 (VFVY…TVLI), 198-218 (ISAL…IYTF), 222-242 (ILIP…GPAA), 272-292 (GGFA…ALAM), 304-324 (VAAL…TEPL), 328-348 (FLFI…TMAA), 352-372 (AFGV…LNWI), and 380-400 (GTVI…FVVF). The region spanning 450-529 (AQKGAIILEA…ERIEEMMKKG (80 aa)) is the PTS EIIB type-1 domain. Catalysis depends on cysteine 472, which acts as the Phosphocysteine intermediate; for EIIB activity.

The protein localises to the cell membrane. The phosphoenolpyruvate-dependent sugar phosphotransferase system (sugar PTS), a major carbohydrate active -transport system, catalyzes the phosphorylation of incoming sugar substrates concomitantly with their translocation across the cell membrane. This system is probably involved in transport of the alpha-glucosides trehalulose, turanose, maltulose and palatinose. The sequence is that of PTS system alpha-glucoside-specific EIICB component from Leptotrichia buccalis (strain ATCC 14201 / DSM 1135 / JCM 12969 / NCTC 10249 / C-1013-b).